Reading from the N-terminus, the 637-residue chain is Cell division cycle-related protein res1/sct1 (637 aa).

An HTH APSES-type domain is found at 6–112 (IHKITYSGVE…YSGSAFMPMS (107 aa)). Residues 37 to 58 (ATQILKIAELDKPRRTRILEKF) constitute a DNA-binding region (H-T-H motif). The segment at 114 to 137 (FTPQSNRKPTEAYRRNSPVKKSFS) is disordered. ANK repeat units lie at residues 236–265 (DGHTALHWAAAMGNLEMMHALLQAGANVVA) and 357–386 (HGDTALLICARNGAKKCARLLLSFYASSSI).

In terms of assembly, DSC1 contains cdc10 and sct1/res1.

Functionally, acts as a positive regulator of the mitotic cell cycle and as a negative regulator of sexual differentiation. May be involved in the transcriptional regulation of the cdc22 and cdt1 genes. Is an integral component of the DSC1-like complex. The sequence is that of Cell division cycle-related protein res1/sct1 (res1) from Schizosaccharomyces pombe (strain 972 / ATCC 24843) (Fission yeast).